The sequence spans 917 residues: Protein translocase subunit SecA (917 aa).

Residues glutamine 87, 105-109 (GEGKT), and aspartate 513 contribute to the ATP site. The interval 834-917 (EEQMNEMEKR…YKSCHGKLTG (84 aa)) is disordered. A compositionally biased stretch (basic and acidic residues) spans 839 to 852 (EMEKRRQEEAERQR). Over residues 862-876 (APSQLAAPATPATPE) the composition is skewed to low complexity. The Zn(2+) site is built by cysteine 900, cysteine 902, cysteine 911, and histidine 912.

This sequence belongs to the SecA family. In terms of assembly, monomer and homodimer. Part of the essential Sec protein translocation apparatus which comprises SecA, SecYEG and auxiliary proteins SecDF-YajC and YidC. Zn(2+) serves as cofactor.

The protein localises to the cell inner membrane. It is found in the cytoplasm. The catalysed reaction is ATP + H2O + cellular proteinSide 1 = ADP + phosphate + cellular proteinSide 2.. In terms of biological role, part of the Sec protein translocase complex. Interacts with the SecYEG preprotein conducting channel. Has a central role in coupling the hydrolysis of ATP to the transfer of proteins into and across the cell membrane, serving both as a receptor for the preprotein-SecB complex and as an ATP-driven molecular motor driving the stepwise translocation of polypeptide chains across the membrane. In Saccharophagus degradans (strain 2-40 / ATCC 43961 / DSM 17024), this protein is Protein translocase subunit SecA.